A 130-amino-acid chain; its full sequence is Small ribosomal subunit protein uS8 (130 aa).

This sequence belongs to the universal ribosomal protein uS8 family. Part of the 30S ribosomal subunit.

One of the primary rRNA binding proteins, it binds directly to 16S rRNA central domain where it helps coordinate assembly of the platform of the 30S subunit. The chain is Small ribosomal subunit protein uS8 from Methanobrevibacter smithii (strain ATCC 35061 / DSM 861 / OCM 144 / PS).